A 475-amino-acid polypeptide reads, in one-letter code: UDP-N-acetylmuramate--L-alanine ligase (475 aa).

125–131 (GTHGKTT) provides a ligand contact to ATP.

The protein belongs to the MurCDEF family.

The protein resides in the cytoplasm. It catalyses the reaction UDP-N-acetyl-alpha-D-muramate + L-alanine + ATP = UDP-N-acetyl-alpha-D-muramoyl-L-alanine + ADP + phosphate + H(+). It participates in cell wall biogenesis; peptidoglycan biosynthesis. Functionally, cell wall formation. The polypeptide is UDP-N-acetylmuramate--L-alanine ligase (Haemophilus influenzae (strain 86-028NP)).